The chain runs to 331 residues: Lipoate-protein ligase LplJ (331 aa).

Residues 27–214 (DPEQQYLLFY…HIFNTNDVGN (188 aa)) form the BPL/LPL catalytic domain. ATP is bound by residues Arg-69, 74 to 77 (GAVY), and Lys-131. Position 131 (Lys-131) interacts with (R)-lipoate.

Belongs to the LplA family.

Its subcellular location is the cytoplasm. It carries out the reaction L-lysyl-[lipoyl-carrier protein] + (R)-lipoate + ATP = N(6)-[(R)-lipoyl]-L-lysyl-[lipoyl-carrier protein] + AMP + diphosphate + H(+). Its pathway is protein modification; protein lipoylation via exogenous pathway; protein N(6)-(lipoyl)lysine from lipoate: step 1/2. It participates in protein modification; protein lipoylation via exogenous pathway; protein N(6)-(lipoyl)lysine from lipoate: step 2/2. In terms of biological role, catalyzes both the ATP-dependent activation of exogenously supplied lipoate to lipoyl-AMP and the transfer of the activated lipoyl onto the lipoyl domains of lipoate-dependent enzymes. Is also able to use octanoate as substrate. This Bacillus subtilis (strain 168) protein is Lipoate-protein ligase LplJ (lplJ).